We begin with the raw amino-acid sequence, 647 residues long: MATKIRILPENLTNKIAAGEVVERPASVAKELVENALDAGSKEVVVEIESGGRRLIKVSDTGCGMSRDDALLALERHATSKIATDEDLFSLCTLGFRGEALPSVASVSRLTISTRTSDSVEGTEIYAEGGRIKEVKECGMAVGTVISVRNLFFNTPARLKFMKSAETEGGHVGELLTRLAISRPEVRFTYKNDGKVVFRALDADLKERVATMLGRSIASFLYPVSYQEGGLKVSGLVAAPECSRSAGSHLYTYINGRFIKDKVVQHAILQAYRNFLERGRYPVVAVFIEIAPGEVDVNVHPTKHEVRFREQGRVHDAIQNAVESVLKETPWLKRPAVAAVSRPTEKDAAAARAVLEGSQAPLPVTPQPRPALTSEKPVPAPQAQPQQSSISEARVAEVRELLVDFQPRPQPSLRPQYQGSVTSKEALPYAPMAAPVPVREPETAAPEPDPAAAGYFSSLGVIGQFNASYILCQRGTDLVLIDQHAAHERVAFEKLKGQFAGREVDSQGLLFPETMEFSFRESAVLREHLAELARLGFEFEEFGGNTWLLKGVPQVLSATRYVDTIRDILEELGSLSRSRAFSDIQEDLLARIACHSVVRGKRTLSQVEITALFKQMDETDFSSNCPHGRPVMQTLTLAEVEKMFKRI.

Disordered stretches follow at residues Glu-356–Ser-391 and Pro-407–Pro-428. Residues Leu-413–Ser-423 show a composition bias toward polar residues.

It belongs to the DNA mismatch repair MutL/HexB family.

Its function is as follows. This protein is involved in the repair of mismatches in DNA. It is required for dam-dependent methyl-directed DNA mismatch repair. May act as a 'molecular matchmaker', a protein that promotes the formation of a stable complex between two or more DNA-binding proteins in an ATP-dependent manner without itself being part of a final effector complex. This Citrifermentans bemidjiense (strain ATCC BAA-1014 / DSM 16622 / JCM 12645 / Bem) (Geobacter bemidjiensis) protein is DNA mismatch repair protein MutL.